The chain runs to 458 residues: Cysteine protease ATG4C (458 aa).

The residue at position 1 (methionine 1) is an N-acetylmethionine. Catalysis depends on cysteine 111, which acts as the Nucleophile. Residues aspartate 345 and histidine 347 contribute to the active site. At serine 451 the chain carries Phosphoserine. Threonine 452 is modified (phosphothreonine).

The protein belongs to the peptidase C54 family.

Its subcellular location is the cytoplasm. It carries out the reaction [protein]-C-terminal L-amino acid-glycyl-phosphatidylethanolamide + H2O = [protein]-C-terminal L-amino acid-glycine + a 1,2-diacyl-sn-glycero-3-phosphoethanolamine. With respect to regulation, inhibited by N-ethylmaleimide. Cysteine protease that plays a key role in autophagy by mediating both proteolytic activation and delipidation of ATG8 family proteins. The protease activity is required for proteolytic activation of ATG8 family proteins: cleaves the C-terminal amino acid of ATG8 proteins MAP1LC3 and GABARAPL2, to reveal a C-terminal glycine. Exposure of the glycine at the C-terminus is essential for ATG8 proteins conjugation to phosphatidylethanolamine (PE) and insertion to membranes, which is necessary for autophagy. In addition to the protease activity, also mediates delipidation of ATG8 family proteins. Catalyzes delipidation of PE-conjugated forms of ATG8 proteins during macroautophagy. Compared to ATG4B, the major protein for proteolytic activation of ATG8 proteins, shows weaker ability to cleave the C-terminal amino acid of ATG8 proteins, while it displays stronger delipidation activity. In contrast to other members of the family, weakly or not involved in phagophore growth during mitophagy. The sequence is that of Cysteine protease ATG4C from Homo sapiens (Human).